A 41-amino-acid chain; its full sequence is Ornatin-A3 (41 aa).

Residues 33-35 (RGD) carry the Cell attachment site motif.

This sequence belongs to the ornatin family.

It localises to the secreted. Its function is as follows. Potent inhibitor of fibrinogen interaction with platelet receptors expressed on glycoprotein IIb-IIIa complex. May prevent blood from clotting during either feeding and/or storage of ingested blood. This is Ornatin-A3 from Placobdella ornata (Turtle leech).